A 580-amino-acid chain; its full sequence is Arginine--tRNA ligase (580 aa).

A 'HIGH' region motif is present at residues Pro-127–His-137.

This sequence belongs to the class-I aminoacyl-tRNA synthetase family. Monomer.

The protein resides in the cytoplasm. The enzyme catalyses tRNA(Arg) + L-arginine + ATP = L-arginyl-tRNA(Arg) + AMP + diphosphate. The sequence is that of Arginine--tRNA ligase from Bdellovibrio bacteriovorus (strain ATCC 15356 / DSM 50701 / NCIMB 9529 / HD100).